Reading from the N-terminus, the 187-residue chain is Ribosome-recycling factor (187 aa).

It belongs to the RRF family.

The protein resides in the cytoplasm. In terms of biological role, responsible for the release of ribosomes from messenger RNA at the termination of protein biosynthesis. May increase the efficiency of translation by recycling ribosomes from one round of translation to another. This chain is Ribosome-recycling factor, found in Nitrobacter winogradskyi (strain ATCC 25391 / DSM 10237 / CIP 104748 / NCIMB 11846 / Nb-255).